A 375-amino-acid chain; its full sequence is FAD-dependent catabolic D-arginine dehydrogenase DauA (375 aa).

FAD-binding positions include alanine 14, 32–33 (ER), 41–48 (STGRSAAH), alanine 171, and 331–336 (GGYGIQ).

Belongs to the FAD-dependent glycerol-3-phosphate dehydrogenase family. Monomer. Requires FAD as cofactor.

The catalysed reaction is D-arginine + A + H2O = 5-guanidino-2-oxopentanoate + AH2 + NH4(+). The enzyme catalyses a D-alpha-amino acid + A + H2O = a 2-oxocarboxylate + AH2 + NH4(+). With respect to regulation, inhibited by D-arginine and D-lysine at high concentration. Its function is as follows. DauA is highly expressed within the cystic fibrosis (CF) lung, and it is required for virulence via the optimal production of hydrogen cyanide, pyocyanine, pyoverdine, rhamnolipid and alginate during biofilm formation. Involved in the catabolism of D-lysine and D-arginine. Under aerobic conditions, the arginine succinyltransferase (AST) and arginine transaminase (ATA) pathways are 2 major routes for L-arginine utilization as the sole source of carbon and nitrogen. The D-to-L racemization of arginine by DauA and DauB is necessary, before to be channeled into the AST and/or ATA pathways. DauA catalyzes the flavin-dependent oxidative deamination of D-arginine into 2-ketoarginine (2-KA) and ammonia. It also has dehydrogenase activity towards D-lysine, D-tyrosine, D-methionine, D-phenylalanine, D-ornithine, D-histidine and D-leucine as substrates. This Pseudomonas aeruginosa (strain ATCC 15692 / DSM 22644 / CIP 104116 / JCM 14847 / LMG 12228 / 1C / PRS 101 / PAO1) protein is FAD-dependent catabolic D-arginine dehydrogenase DauA.